Consider the following 137-residue polypeptide: Phosphoribosyl-AMP cyclohydrolase (137 aa).

Aspartate 84 is a Mg(2+) binding site. Zn(2+) is bound at residue cysteine 85. Mg(2+) is bound by residues aspartate 86 and aspartate 88. Residues cysteine 101 and cysteine 108 each coordinate Zn(2+).

This sequence belongs to the PRA-CH family. In terms of assembly, homodimer. Requires Mg(2+) as cofactor. Zn(2+) serves as cofactor.

It localises to the cytoplasm. It carries out the reaction 1-(5-phospho-beta-D-ribosyl)-5'-AMP + H2O = 1-(5-phospho-beta-D-ribosyl)-5-[(5-phospho-beta-D-ribosylamino)methylideneamino]imidazole-4-carboxamide. Its pathway is amino-acid biosynthesis; L-histidine biosynthesis; L-histidine from 5-phospho-alpha-D-ribose 1-diphosphate: step 3/9. Catalyzes the hydrolysis of the adenine ring of phosphoribosyl-AMP. This chain is Phosphoribosyl-AMP cyclohydrolase, found in Pelodictyon phaeoclathratiforme (strain DSM 5477 / BU-1).